Reading from the N-terminus, the 228-residue chain is E3 ubiquitin-protein ligase RNF114 (228 aa).

The segment at 29–68 (CPVCLEVYEKPVQVPCGHVFCSACLQECLKPKKPVCGVCR) adopts an RING-type zinc-finger fold. Zn(2+)-binding residues include C91 and C94. The segment at 91-110 (CHGCRKNFFLSKIRSHVATC) adopts a C2HC RNF-type zinc-finger fold. K102 is modified (N6-acetyllysine). Zn(2+)-binding residues include H106 and C110. K112 is modified (N6-acetyllysine).

In terms of assembly, interacts with XAF1, the interaction increases XAF1 stability and proapoptotic effects, and may regulate IFN signaling. Post-translationally, autoubiquitinated. Polyubiquitinated in the presence of E2 enzymes UBE2D1, UBE2D2 and UBE2D3, but only monoubiquitinated in the presence of UBE2E1. In terms of tissue distribution, expressed in numerous tissues, including skin, CD4 lymphocytes and dendritic cells. Highest levels in testis.

The protein localises to the cytoplasm. Its subcellular location is the nucleus. It catalyses the reaction S-ubiquitinyl-[E2 ubiquitin-conjugating enzyme]-L-cysteine + [acceptor protein]-L-lysine = [E2 ubiquitin-conjugating enzyme]-L-cysteine + N(6)-ubiquitinyl-[acceptor protein]-L-lysine.. It participates in protein modification; protein ubiquitination. Its function is as follows. E3 ubiquitin-protein ligase that promotes the ubiquitination of various substrates. In turn, participates in the regulation of many biological processes including cell cycle, apoptosis, osteoclastogenesis as well as innate or adaptive immunity. Acts as a negative regulator of NF-kappa-B-dependent transcription by promoting the ubiquitination and stabilization of the NF-kappa-B inhibitor TNFAIP3. May promote the ubiquitination of TRAF6 as well. Also acts as a negative regulator of T-cell activation. Inhibits cellular dsRNA responses and interferon production by targeting MAVS component for proteasomal degradation. Ubiquitinates the CDK inhibitor CDKN1A leading to its degradationand probably also CDKN1B and CDKN1C. This activity stimulates cell cycle G1-to-S phase transition and suppresses cellular senescence. May play a role in spermatogenesis. This is E3 ubiquitin-protein ligase RNF114 (RNF114) from Homo sapiens (Human).